We begin with the raw amino-acid sequence, 127 residues long: Modulator protein MzrA (127 aa).

Over 1–10 (MQIPRMSLRQ) the chain is Cytoplasmic. Residues 11–31 (LAWSGAVLLLVGTLLLAWSAV) form a helical membrane-spanning segment. At 32-127 (RQQESTLAIR…RLRDNSHRFG (96 aa)) the chain is on the periplasmic side.

This sequence belongs to the MzrA family. Interacts with EnvZ.

It localises to the cell inner membrane. Its function is as follows. Modulates the activity of the EnvZ/OmpR two-component regulatory system, probably by directly modulating EnvZ enzymatic activity and increasing stability of phosphorylated OmpR. Links the two-component systems CpxA/CpxR and EnvZ/OmpR. The polypeptide is Modulator protein MzrA (Escherichia coli (strain K12)).